The sequence spans 180 residues: Adenine phosphoribosyltransferase (180 aa).

At Ala-2 the chain carries N-acetylalanine. Residues Ser-15 and Ser-30 each carry the phosphoserine modification. Position 60 is a phosphotyrosine (Tyr-60). Ser-66 is modified (phosphoserine). Residue Lys-114 is modified to N6-acetyllysine. Phosphothreonine is present on Thr-135.

Belongs to the purine/pyrimidine phosphoribosyltransferase family. Homodimer.

The protein localises to the cytoplasm. It carries out the reaction AMP + diphosphate = 5-phospho-alpha-D-ribose 1-diphosphate + adenine. It participates in purine metabolism; AMP biosynthesis via salvage pathway; AMP from adenine: step 1/1. Its function is as follows. Catalyzes a salvage reaction resulting in the formation of AMP, that is energically less costly than de novo synthesis. The sequence is that of Adenine phosphoribosyltransferase from Dipodillus campestris (North African gerbil).